A 624-amino-acid polypeptide reads, in one-letter code: Phragmoplastin DRP1E (624 aa).

Residue Thr2 is modified to N-acetylthreonine. The region spanning 37-306 (WEALPTVAVV…LESVIRTRIP (270 aa)) is the Dynamin-type G domain. A G1 motif region spans residues 47 to 54 (GGQSSGKS). Position 50–55 (50–55 (SSGKSS)) interacts with GTP. Positions 73–75 (VTR) are G2 motif. The G3 motif stretch occupies residues 148 to 151 (DLPG). The G4 motif stretch occupies residues 217-220 (TKLD). Residues 218 to 223 (KLDLMD) and 248 to 251 (NRSQ) each bind GTP. The G5 motif stretch occupies residues 247–250 (VNRS). The 93-residue stretch at 532 to 624 (FRRIASNVSA…DEIDAVAWVR (93 aa)) folds into the GED domain.

The protein belongs to the TRAFAC class dynamin-like GTPase superfamily. Dynamin/Fzo/YdjA family. Forms homodimer and may homooligomerize and heterooligomerize to form the phragmoplastin complex. Binds to PHIP1. Ubiquitous.

The protein localises to the cytoplasm. It localises to the cytoskeleton. Its subcellular location is the phragmoplast. It carries out the reaction GTP + H2O = GDP + phosphate + H(+). In terms of biological role, microtubule-associated force-producing protein that is targeted to the tubulo-vesicular network of the forming cell plate during cytokinesis. Also plays a major role in plasma membrane maintenance and cell wall integrity with an implication in vesicular trafficking, polar cell expansion, and other aspects of plant growth and development. Has a GTPase activity. The protein is Phragmoplastin DRP1E of Arabidopsis thaliana (Mouse-ear cress).